The primary structure comprises 278 residues: Energy-coupling factor transporter ATP-binding protein EcfA1 (278 aa).

The region spanning 5–239 (LLLESVSYQY…QDKLEAAGID (235 aa)) is the ABC transporter domain. Residue 39-46 (GPNGSGKS) participates in ATP binding.

Belongs to the ABC transporter superfamily. Energy-coupling factor EcfA family. Forms a stable energy-coupling factor (ECF) transporter complex composed of 2 membrane-embedded substrate-binding proteins (S component), 2 ATP-binding proteins (A component) and 2 transmembrane proteins (T component).

The protein localises to the cell membrane. In terms of biological role, ATP-binding (A) component of a common energy-coupling factor (ECF) ABC-transporter complex. Unlike classic ABC transporters this ECF transporter provides the energy necessary to transport a number of different substrates. This chain is Energy-coupling factor transporter ATP-binding protein EcfA1, found in Halalkalibacterium halodurans (strain ATCC BAA-125 / DSM 18197 / FERM 7344 / JCM 9153 / C-125) (Bacillus halodurans).